We begin with the raw amino-acid sequence, 1036 residues long: Isoleucine--tRNA ligase (1036 aa).

The short motif at 46–56 (PFATGLPHYGH) is the 'HIGH' region element. The short motif at 589–593 (KMSKR) is the 'KMSKS' region element. An ATP-binding site is contributed by Lys-592.

The protein belongs to the class-I aminoacyl-tRNA synthetase family. IleS type 2 subfamily. Monomer. Zn(2+) serves as cofactor.

It localises to the cytoplasm. The catalysed reaction is tRNA(Ile) + L-isoleucine + ATP = L-isoleucyl-tRNA(Ile) + AMP + diphosphate. Its function is as follows. Catalyzes the attachment of isoleucine to tRNA(Ile). As IleRS can inadvertently accommodate and process structurally similar amino acids such as valine, to avoid such errors it has two additional distinct tRNA(Ile)-dependent editing activities. One activity is designated as 'pretransfer' editing and involves the hydrolysis of activated Val-AMP. The other activity is designated 'posttransfer' editing and involves deacylation of mischarged Val-tRNA(Ile). This Chlamydia trachomatis serovar D (strain ATCC VR-885 / DSM 19411 / UW-3/Cx) protein is Isoleucine--tRNA ligase.